Consider the following 324-residue polypeptide: Interactor of constitutive active ROPs 4 (324 aa).

Disordered stretches follow at residues 1–74, 91–156, 175–201, and 289–324; these read MPKP…SGLE, LAKA…ASKE, SLSE…KAKE, and FVGS…KGQK. A compositionally biased stretch (low complexity) spans 13-28; that stretch reads QRQSPRLRTSLLSTSS. Basic and acidic residues-rich tracts occupy residues 29–50, 95–106, and 118–156; these read DPHH…DRRS, EAAKKRAQEELH, and PERD…ASKE. Positions 62–266 form a coiled coil; sequence SQKKLGSRIS…ADAAAAVLSG (205 aa). Over residues 313–324 the composition is skewed to basic and acidic residues; that stretch reads MFGDLWKKKGQK.

It belongs to the ICR family. As to quaternary structure, interacts with ARAC11 in vitro.

In terms of biological role, acts as a scaffold, mediating interaction of ROPs with different proteins. The sequence is that of Interactor of constitutive active ROPs 4 (ICR4) from Arabidopsis thaliana (Mouse-ear cress).